Here is a 362-residue protein sequence, read N- to C-terminus: Solute carrier family 25 member 3 (362 aa).

The transit peptide at 1 to 49 directs the protein to the mitochondrion; the sequence is MFSSVAHLARANPFNTPHLQLVHDGLGDLRSSSPGPTGQPRRPRNLAAA. Topologically, residues 50 to 63 are mitochondrial intermembrane; the sequence is AVEEQYSCDYGSGR. 3 Solcar repeats span residues 63 to 147, 160 to 244, and 261 to 339; these read RFFI…FKVL, WRTS…TVEA, and EQLV…VKVY. A helical transmembrane segment spans residues 64-86; it reads FFILCGLGGIISCGTTHTALVPL. Topologically, residues 87 to 121 are mitochondrial matrix; the sequence is DLVKCRMQVDPQKYKGIFNGFSVTLKEDGVRGLAK. Lysine 99 is modified (N6-acetyllysine). Residue lysine 112 is modified to N6-methyllysine. A helical membrane pass occupies residues 122-141; the sequence is GWAPTFLGYSMQGLCKFGFY. Residues 142 to 161 lie on the Mitochondrial intermembrane side of the membrane; it reads EVFKVLYSNMLGEENTYLWR. Residues 162-183 traverse the membrane as a helical segment; the sequence is TSLYLAASASAEFFADIALAPM. Residues 184 to 218 lie on the Mitochondrial matrix side of the membrane; sequence EAAKVRIQTQPGYANTLRDAAPKMYKEEGLKAFYK. Position 196 is a phosphotyrosine (tyrosine 196). Position 209 is an N6-acetyllysine (lysine 209). A helical transmembrane segment spans residues 219–238; it reads GVAPLWMRQIPYTMMKFACF. Topologically, residues 239 to 261 are mitochondrial intermembrane; sequence ERTVEALYKFVVPKPRSECSKPE. A helical membrane pass occupies residues 262 to 284; that stretch reads QLVVTFVAGYIAGVFCAIVSHPA. The Mitochondrial matrix segment spans residues 285–314; sequence DSVVSVLNKEKGSSASLVLKRLGFKGVWKG. Residues 315–333 form a helical membrane-spanning segment; that stretch reads LFARIIMIGTLTALQWFIY. Over 334–362 the chain is Mitochondrial intermembrane; the sequence is DSVKVYFRLPRPPPPEMPESLKKKLGLTQ.

The protein belongs to the mitochondrial carrier (TC 2.A.29) family. In terms of assembly, interacts with PPIF; the interaction is impaired by CsA.

Its subcellular location is the mitochondrion inner membrane. It carries out the reaction phosphate(in) + H(+)(in) = phosphate(out) + H(+)(out). Its function is as follows. Inorganic ion transporter that transports phosphate or copper ions across the mitochondrial inner membrane into the matrix compartment. Mediates proton-coupled symport of phosphate ions necessary for mitochondrial oxidative phosphorylation of ADP to ATP. Transports copper ions probably in the form of anionic copper(I) complexes to maintain mitochondrial matrix copper pool and to supply copper for cytochrome C oxidase complex assembly. May also play a role in regulation of the mitochondrial permeability transition pore (mPTP). In Homo sapiens (Human), this protein is Solute carrier family 25 member 3.